We begin with the raw amino-acid sequence, 344 residues long: Sensor histidine kinase GraS (344 aa).

A run of 2 helical transmembrane segments spans residues 18-38 and 43-63; these read IFWIVFLHLILLGMAYIDYDI and IGFIVTLNLGLTAMFLIFTFL. The 207-residue stretch at 126 to 332 folds into the Histidine kinase domain; sequence EFVHDIKTPV…TFVLTFPKQN (207 aa). His129 carries the post-translational modification Phosphohistidine; by autocatalysis.

Autophosphorylated.

The protein localises to the cell membrane. The catalysed reaction is ATP + protein L-histidine = ADP + protein N-phospho-L-histidine.. Functionally, member of the two-component regulatory system GraR/GraS involved in resistance against cationic antimicrobial peptides (CAMPs). GraS probably functions as a sensor protein kinase which is autophosphorylated at a histidine residue and transfers its phosphate group to GraR. The protein is Sensor histidine kinase GraS (graS) of Staphylococcus haemolyticus (strain JCSC1435).